The following is a 291-amino-acid chain: ATP synthase gamma chain (291 aa).

This sequence belongs to the ATPase gamma chain family. As to quaternary structure, F-type ATPases have 2 components, CF(1) - the catalytic core - and CF(0) - the membrane proton channel. CF(1) has five subunits: alpha(3), beta(3), gamma(1), delta(1), epsilon(1). CF(0) has three main subunits: a, b and c.

It localises to the cell inner membrane. Functionally, produces ATP from ADP in the presence of a proton gradient across the membrane. The gamma chain is believed to be important in regulating ATPase activity and the flow of protons through the CF(0) complex. The polypeptide is ATP synthase gamma chain (Burkholderia cenocepacia (strain ATCC BAA-245 / DSM 16553 / LMG 16656 / NCTC 13227 / J2315 / CF5610) (Burkholderia cepacia (strain J2315))).